A 510-amino-acid polypeptide reads, in one-letter code: GMP synthase [glutamine-hydrolyzing] (510 aa).

Positions 5–195 constitute a Glutamine amidotransferase type-1 domain; sequence LVIVVDFGGQ…LFDICNLKGD (191 aa). Catalysis depends on C82, which acts as the Nucleophile. Catalysis depends on residues H169 and E171. One can recognise a GMPS ATP-PPase domain in the interval 196-385; the sequence is WSMSSFVDEK…LGIPHKLVWR (190 aa). 223–229 is a binding site for ATP; the sequence is SGGVDSS.

As to quaternary structure, homodimer.

The enzyme catalyses XMP + L-glutamine + ATP + H2O = GMP + L-glutamate + AMP + diphosphate + 2 H(+). It participates in purine metabolism; GMP biosynthesis; GMP from XMP (L-Gln route): step 1/1. In terms of biological role, catalyzes the synthesis of GMP from XMP. The protein is GMP synthase [glutamine-hydrolyzing] of Clostridium kluyveri (strain NBRC 12016).